The sequence spans 404 residues: Cysteine desulfurase IscS (404 aa).

Residues 75–76 (AT), asparagine 155, glutamine 183, and 203–205 (SAH) each bind pyridoxal 5'-phosphate. At lysine 206 the chain carries N6-(pyridoxal phosphate)lysine. Threonine 243 lines the pyridoxal 5'-phosphate pocket. Cysteine 328 acts as the Cysteine persulfide intermediate in catalysis. [2Fe-2S] cluster is bound at residue cysteine 328.

Belongs to the class-V pyridoxal-phosphate-dependent aminotransferase family. NifS/IscS subfamily. Homodimer. Forms a heterotetramer with IscU, interacts with other sulfur acceptors. Pyridoxal 5'-phosphate is required as a cofactor.

Its subcellular location is the cytoplasm. It catalyses the reaction (sulfur carrier)-H + L-cysteine = (sulfur carrier)-SH + L-alanine. It participates in cofactor biosynthesis; iron-sulfur cluster biosynthesis. Functionally, master enzyme that delivers sulfur to a number of partners involved in Fe-S cluster assembly, tRNA modification or cofactor biosynthesis. Catalyzes the removal of elemental sulfur atoms from cysteine to produce alanine. Functions as a sulfur delivery protein for Fe-S cluster synthesis onto IscU, an Fe-S scaffold assembly protein, as well as other S acceptor proteins. This is Cysteine desulfurase IscS from Tolumonas auensis (strain DSM 9187 / NBRC 110442 / TA 4).